The chain runs to 508 residues: Amphoterin-induced protein 3 (508 aa).

The N-terminal stretch at 1-19 (MAWLVLLGLLLCMLGAGSG) is a signal peptide. The Extracellular segment spans residues 20–383 (TSDLEGVLPP…PRPEPEAFNT (364 aa)). Residues 25–61 (GVLPPDPHNCPNKCVCAADVLSCAGRGLQDLPAALPA) form the LRRNT domain. Intrachain disulfides connect Cys34-Cys40 and Cys38-Cys47. LRR repeat units follow at residues 62 to 83 (TAAE…WLAP), 86 to 107 (RLRA…VFTN), 110 to 131 (GLRI…DLDG), 134 to 155 (ELEK…AFQG), 158 to 178 (MLSH…NHLH), and 184 to 207 (RLRT…AALP). An N-linked (GlcNAc...) asparagine glycan is attached at Asn107. The region spanning 219 to 275 (NPLPCDCSLYHLLRRWHQRGLSALHDFEREYTCLAFKVAESRVRFFEHSRVFKNCSV) is the LRRCT domain. Disulfide bonds link Cys223–Cys251, Cys225–Cys273, and Cys300–Cys352. N-linked (GlcNAc...) asparagine glycosylation is found at Asn272, Asn301, Asn362, and Asn368. Residues 279 to 370 (PGLELPEEEL…HNQTLEYNVS (92 aa)) form the Ig-like C2-type domain. The chain crosses the membrane as a helical span at residues 384–404 (GFTTLLGCIVGLVLVLLYLFA). Residues 405–508 (PPCRGCCRCC…STGSEGLMMS (104 aa)) lie on the Cytoplasmic side of the membrane.

The protein belongs to the immunoglobulin superfamily. AMIGO family. As to quaternary structure, binds AMIGO1 or AMIGO2.

The protein resides in the membrane. Its function is as follows. May mediate heterophilic cell-cell interaction. May contribute to signal transduction through its intracellular domain. This chain is Amphoterin-induced protein 3, found in Rattus norvegicus (Rat).